A 697-amino-acid chain; its full sequence is Ion-translocating oxidoreductase complex subunit C (697 aa).

4Fe-4S ferredoxin-type domains lie at 366–397 (AEMGLSEPEQSCIRCGLCVDACPAGLLPQQLY) and 407–436 (KARNHNLFDCIECGACAYVCPSNIPLVQYY). [4Fe-4S] cluster contacts are provided by Cys-377, Cys-380, Cys-383, Cys-387, Cys-416, Cys-419, Cys-422, and Cys-426. Positions 576 to 674 (AQLESEPVKS…APEEDPRKAA (99 aa)) are disordered. Positions 581-596 (EPVKSESEAPEEDPRK) are enriched in basic and acidic residues. A compositionally biased stretch (low complexity) spans 597–615 (AAVAAAIARVKAKKAAQAQ). Basic and acidic residues predominate over residues 619 to 634 (EPVKSESEAPEEDPRK). A compositionally biased stretch (low complexity) spans 635–653 (AAVAAAIARVKAKKAAQAQ). Positions 657 to 672 (EPVKSESEAPEEDPRK) are enriched in basic and acidic residues.

This sequence belongs to the 4Fe4S bacterial-type ferredoxin family. RnfC subfamily. In terms of assembly, the complex is composed of six subunits: RnfA, RnfB, RnfC, RnfD, RnfE and RnfG. The cofactor is [4Fe-4S] cluster.

The protein localises to the cell inner membrane. Functionally, part of a membrane-bound complex that couples electron transfer with translocation of ions across the membrane. The sequence is that of Ion-translocating oxidoreductase complex subunit C from Yersinia enterocolitica serotype O:8 / biotype 1B (strain NCTC 13174 / 8081).